A 241-amino-acid polypeptide reads, in one-letter code: Pyridoxal phosphate phosphatase PHOSPHO2 (241 aa).

The active-site Nucleophile is the Asp8. Mg(2+) is bound by residues Asp8 and Asp10. Asp10 acts as the Proton donor in catalysis. Asp19 and Asp99 together coordinate substrate. Asp179 contacts Mg(2+).

The protein belongs to the HAD-like hydrolase superfamily. PHOSPHO family. Requires Mg(2+) as cofactor.

It catalyses the reaction pyridoxal 5'-phosphate + H2O = pyridoxal + phosphate. Its function is as follows. Phosphatase that has high activity toward pyridoxal 5'-phosphate (PLP). Also active at much lower level toward pyrophosphate, phosphoethanolamine (PEA), phosphocholine (PCho), phospho-l-tyrosine, fructose-6-phosphate, p-nitrophenyl phosphate, and h-glycerophosphate. In Mus musculus (Mouse), this protein is Pyridoxal phosphate phosphatase PHOSPHO2 (Phospho2).